The following is a 369-amino-acid chain: MFTALEKVVDTLRLRIFCFSACCNEVNASKKKGKKMSANEIKNQLHVMHDPFSDKTSQPKIPDGKANESLGFATQTVQEVGNAEGANTMHILLFPGQNSGILIDETAQADLGSRTYYIPTFFGSNGLDWDDLADATTAANVRGLDNYALWRVVSTGLQLKLLNPVDQDDGWWESVRVTTENTNVDWYLTTGNNSTQPGGNNGTIAPVGLINSLLSQQTLANEQSYSTGLLRDLHRVQFECHGQRDYHDFIQQRNEIRLAGAAISAVDKTTNYEAQFSLGHDDANDVINQFVDRSYDMVYIRLHCRQNTGTTPFLGSRFHLNCVSNQEVIFDHEERESRFHTRSHTIGSNANSVHMQARRADQNAAKMTM.

Its subcellular location is the host nucleus. The protein resides in the virion. Its function is as follows. Self-assembles to form the virion icosahedral capsid. The protein is Capsid protein of Avon-Heathcote Estuary associated kieseladnavirus (AHEaBV).